Here is a 1568-residue protein sequence, read N- to C-terminus: Myosin-2 (1568 aa).

Residues 4-57 (EVGTRCWYPHKELGWIGAEVIKNEVKDGKYHLELSLEDDEVVSVDTEDLNDDKN) enclose the Myosin N-terminal SH3-like domain. One can recognise a Myosin motor domain in the interval 70 to 783 (EATEDLTSLS…MLAYLEKLRS (714 aa)). 164 to 171 (GESGAGKT) is an ATP binding site. Positions 443–523 (FIGVLDIYGF…LGILSLLDEE (81 aa)) are actin-binding. The disordered stretch occupies residues 619–641 (KKAELEQNNPGNKKPGPARTVNR). IQ domains are found at residues 786 to 808 (MHNSIVTIQKKIRAKYYRNQYLK), 809 to 833 (ISQAIKIWQSNTRGFIIRHRVYHEM), 834 to 856 (KVHSATLIQATYRGYAIRKNVFN), 857 to 881 (VLITIINLQTRIREELKRKQLKREH), 882 to 904 (EYNAAVTIQSKVRTFEPRSTFLN), and 905 to 934 (TKRDTVVVQSLIRRRAAQGRLRQLKSDAKS). Positions 944-1088 (KLENKVIELT…ISRLQTAMSL (145 aa)) form a coiled coil. Residues 1089-1568 (GTVTTSVLPQ…VAQQVVQDGH (480 aa)) form a non alpha-helical, tail domain region. One can recognise a Dilute domain in the interval 1223 to 1498 (AQVLTTIQKV…LRYVADIVKK (276 aa)).

The protein belongs to the TRAFAC class myosin-kinesin ATPase superfamily. Myosin family. In terms of assembly, homodimer. Interacts with calmodulin (CMD1) and the myosin light chain MLC1 through its IQ repeats.

Myosin heavy chain that is required for the cell cycle-regulated transport of various organelles and proteins for their segregation. Functions by binding with its tail domain to receptor proteins on organelles and exerting force with its N-terminal motor domain against actin filaments, thereby transporting its cargo along polarized actin cables. This Saccharomyces uvarum (strain ATCC 76518 / CBS 7001 / CLIB 283 / NBRC 10550 / MCYC 623 / NCYC 2669 / NRRL Y-11845) (Yeast) protein is Myosin-2 (MYO2).